A 213-amino-acid chain; its full sequence is N-(5'-phosphoribosyl)anthranilate isomerase (213 aa).

It belongs to the TrpF family.

The catalysed reaction is N-(5-phospho-beta-D-ribosyl)anthranilate = 1-(2-carboxyphenylamino)-1-deoxy-D-ribulose 5-phosphate. It functions in the pathway amino-acid biosynthesis; L-tryptophan biosynthesis; L-tryptophan from chorismate: step 3/5. The chain is N-(5'-phosphoribosyl)anthranilate isomerase from Leptospira interrogans serogroup Icterohaemorrhagiae serovar copenhageni (strain Fiocruz L1-130).